The sequence spans 456 residues: Bifunctional protein GlmU (456 aa).

The pyrophosphorylase stretch occupies residues M1–R229. Residues L11–G14, K25, Q76, G81–T82, Y103–D105, G140, E154, N169, and N227 contribute to the UDP-N-acetyl-alpha-D-glucosamine site. D105 provides a ligand contact to Mg(2+). A Mg(2+)-binding site is contributed by N227. The interval L230–A250 is linker. Residues G251 to K456 are N-acetyltransferase. 2 residues coordinate UDP-N-acetyl-alpha-D-glucosamine: R333 and K351. H363 functions as the Proton acceptor in the catalytic mechanism. 2 residues coordinate UDP-N-acetyl-alpha-D-glucosamine: Y366 and N377. Acetyl-CoA is bound by residues A380, N386–Y387, S405, A423, and R440.

It in the N-terminal section; belongs to the N-acetylglucosamine-1-phosphate uridyltransferase family. The protein in the C-terminal section; belongs to the transferase hexapeptide repeat family. In terms of assembly, homotrimer. The cofactor is Mg(2+).

Its subcellular location is the cytoplasm. It catalyses the reaction alpha-D-glucosamine 1-phosphate + acetyl-CoA = N-acetyl-alpha-D-glucosamine 1-phosphate + CoA + H(+). It carries out the reaction N-acetyl-alpha-D-glucosamine 1-phosphate + UTP + H(+) = UDP-N-acetyl-alpha-D-glucosamine + diphosphate. It participates in nucleotide-sugar biosynthesis; UDP-N-acetyl-alpha-D-glucosamine biosynthesis; N-acetyl-alpha-D-glucosamine 1-phosphate from alpha-D-glucosamine 6-phosphate (route II): step 2/2. The protein operates within nucleotide-sugar biosynthesis; UDP-N-acetyl-alpha-D-glucosamine biosynthesis; UDP-N-acetyl-alpha-D-glucosamine from N-acetyl-alpha-D-glucosamine 1-phosphate: step 1/1. It functions in the pathway bacterial outer membrane biogenesis; LPS lipid A biosynthesis. Catalyzes the last two sequential reactions in the de novo biosynthetic pathway for UDP-N-acetylglucosamine (UDP-GlcNAc). The C-terminal domain catalyzes the transfer of acetyl group from acetyl coenzyme A to glucosamine-1-phosphate (GlcN-1-P) to produce N-acetylglucosamine-1-phosphate (GlcNAc-1-P), which is converted into UDP-GlcNAc by the transfer of uridine 5-monophosphate (from uridine 5-triphosphate), a reaction catalyzed by the N-terminal domain. The sequence is that of Bifunctional protein GlmU from Shigella sonnei (strain Ss046).